Consider the following 887-residue polypeptide: Amyloid-beta-like protein (887 aa).

Positions 1–27 (MCAALRRNLLLRSLWVVLAIGTAQVQA) are cleaved as a signal peptide. The Extracellular portion of the chain corresponds to 28-813 (ASPRWEPQIA…HAAKEGRNVY (786 aa)). The segment at 30–133 (PRWEPQIAVL…KPFRCLGPFQ (104 aa)) is GFLD subdomain. The E1 domain occupies 30–199 (PRWEPQIAVL…SGVEFVCCPK (170 aa)). 6 disulfides stabilise this stretch: Cys40-Cys70, Cys81-Cys128, Cys106-Cys116, Cys143-Cys197, Cys154-Cys184, and Cys168-Cys196. Residues 141 to 199 (EGCLFDHIHNASRCWPFVRWNQTGAAACQERGMQMRSFAMLLPCGISVFSGVEFVCCPK) form a cuBD subdomain region. Residues Asn150 and Asn161 are each glycosylated (N-linked (GlcNAc...) asparagine). Disordered regions lie at residues 225-365 (NDEL…STPQ) and 377-396 (NSGNSGTGAGAPPSTAQPTS). 2 N-linked (GlcNAc...) asparagine glycosylation sites follow: Asn237 and Asn240. A compositionally biased stretch (acidic residues) spans 246 to 267 (NEDDLDDEDDLMGDDEEDDMVA). Positions 268–292 (DEAATAGGSPNTGSSGDSNSGSLDD) are enriched in low complexity. Residues 293 to 321 (INAEYDSGEEGDNYEEDGAGSESEAEVEA) show a composition bias toward acidic residues. The span at 329–352 (AKVVSLKSDSSSPSSAPVAPAPEK) shows a compositional bias: low complexity. Residues 395 to 597 (TSDPYFTHFD…AKIAQLMNDY (203 aa)) enclose the E2 domain. Residue Asn574 is glycosylated (N-linked (GlcNAc...) asparagine). Residues 675-743 (KSQVAEQQSQ…TEYGEATVSS (69 aa)) form a disordered region. Residues 681-699 (QQSQPTQSSTQSQAQQQQQ) show a composition bias toward low complexity. A helical transmembrane segment spans residues 814 to 834 (FTLSFAGIALMAAVFVGVAVA). Topologically, residues 835 to 887 (KWRTSRSPHAQGFIEVDQNVTTHHPIVREEKIVPNMQINGYENPTYKYFEVKE) are cytoplasmic. Positions 875–880 (YENPTY) match the YENPXY motif motif.

Belongs to the APP family. Interacts (via the intracellular domain, ICD) with APP-BP1. As to expression, expressed in postmitotic neurons in the central and peripheral nervous systems. Within the nervous system, transcripts are not observed in neuroblasts, newly generated neurons and at least one class of presumed glial cells.

The protein localises to the membrane. In terms of biological role, during development, plays a role in the regulation of the neddylation pathway. Appl and APP-BP1 interact antagonistically during development. The polypeptide is Amyloid-beta-like protein (Appl) (Drosophila melanogaster (Fruit fly)).